The following is a 1146-amino-acid chain: MSDYFSSRPSQTLTPMGNKPSGGGGGDDASSIHSKSSQYLMDILPDSMTLNESVSSIVANNQAKEFILPETDERSPYFINVPIPKAQPTSTTETKKPLAGDEAIDGQFVKEYPTDILVDRFYKWKKILKGLVIYLREVAYAQEQFARINYQLKGSVKFPFLTDIDETTNTITDPFTTAPRGPKKAQPAQKKVGLTDSEQFQMQMQQEQQENAVQAPTDESKMSLAPHEYKPVQTTESDNTSAASGFVKFGSGSIQDIQVILKKYHLSLANQQFKISKEITSTVIPKLEELRKDLRYKITEIKDLHGDFKTNIGAHIQLTSQLLKKYIAAVKFMNAHGIGNDRASPTNKKPHKLDPKHDPYLLKLQLDLQLKRQVAEETYLQEAFINLQSSGLQLEKIIYTKIQHALLRYSALIDSEARLMIKNMCQELQHGIISKPPAFEWDNFVTQHPSCLLNWKSNDPIPPPRKVSDVIYPHMKSPLAKCIKAGYFLKKSELLPTYHQGYFVLTSNYIHEFQSSDFYNLSSSTPNSTKSSAYSSSVSIADTYANANNAKANNHHRQASDVHNSSTTTGGTAGANGIRGIRKKSYLAPIMSIPLNDCTLKDASSTKFVLVGKPTLNENADVRKSSSSTYLSGSSQASLPKYGHETAKIFSKAPFHKFLKGSKPKNKNTKSSELDQFYAAAQKESNNYVTWTFKIVSPEPSEEELKHFKRWVQDLKNLTSFNDTKDRIKFIEDRVMKSHRFKAGHMSRNSVNIGSHTPCLTDSTFTLQDGTTTSVNLKGRAEKPQYIHIQNNSLADFDGNGFRSKVNTPAIDDYGNLITVERRPAQSPHQYSDYMATSGNTTPSYSSGSRPQSMYNGYNPAVSITSNGMMLQQSTANNNTNPTTNLRHQRNISQTSSLPGFSYTSLSLPVNSPGSSNSESSSGGYFAIPLHGNNNNNNYTQRNSEGSSPCYNDDQIRQQQQPLQMQPLSRTSSSSVNVTAMRSTSAGNSITANAPVVPKVMVNNQNVKTVAADQSATAPSSPTMNSSVTTINRESPYQTLKKTNSTGNVPCLTAEKTHAHPAFYKRGNNSAQNLTTSSSTASRVHPIRKHKKNVSFSSLNSLMFSKKGANHGGNLMTNQFMSGGIQEDDGDSTNNDTIKLNQSIYS.

A compositionally biased stretch (polar residues) spans 1-15 (MSDYFSSRPSQTLTP). Disordered stretches follow at residues 1–32 (MSDY…ASSI) and 171–194 (ITDP…KVGL). Residue Ser-344 is modified to Phosphoserine. In terms of domain architecture, PH spans 482–606 (CIKAGYFLKK…DCTLKDASST (125 aa)). The segment at 553–575 (NNHHRQASDVHNSSTTTGGTAGA) is disordered. Positions 564–575 (NSSTTTGGTAGA) are enriched in low complexity. The residue at position 793 (Ser-793) is a Phosphoserine. Thr-808 carries the phosphothreonine modification. Disordered stretches follow at residues 835–854 (MATS…PQSM) and 909–982 (PVNS…TAMR). Low complexity predominate over residues 912–924 (SPGSSNSESSSGG). Residues 939-950 (YTQRNSEGSSPC) show a composition bias toward polar residues. Residue Ser-944 is modified to Phosphoserine. Residues 958-968 (QQQQPLQMQPL) are compositionally biased toward low complexity. Ser-969 is subject to Phosphoserine. Residues 969 to 982 (SRTSSSSVNVTAMR) are compositionally biased toward polar residues. Thr-1017 carries the phosphothreonine modification. Phosphoserine occurs at positions 1070, 1095, and 1098. Residues 1124–1146 (GIQEDDGDSTNNDTIKLNQSIYS) are disordered. The segment covering 1132–1146 (STNNDTIKLNQSIYS) has biased composition (polar residues).

The protein belongs to the RGC1 family. As to quaternary structure, component of the RNA polymerase II holoenzyme. Interacts with RPO21 and SSN8. In terms of processing, phosphorylated in response to various stresses. stress-induced phosphorylation is partially dependent on HOG1.

Its subcellular location is the cytoplasm. Its function is as follows. Positive regulator of FPS1 glycerol channel required for the glycerol efflux. As a component of the RNA polymerase II holoenzyme, is required for SSN8 destruction in response to oxidative stress but not heat shock. Required for cell survival in response to heat shock independent of SSN8. The sequence is that of Activator of SKN7 protein 10 (ASK10) from Saccharomyces cerevisiae (strain ATCC 204508 / S288c) (Baker's yeast).